Here is a 134-residue protein sequence, read N- to C-terminus: Replication enhancer protein (134 aa).

Belongs to the geminiviridae replication enhancer protein family. Homooligomer. Interacts with the replication-associated protein (REP). Interacts with host proliferating cell nuclear antigen (PCNA). Interacts with host retinoblastoma-related protein 1 (RBR1), and may thereby deregulate the host cell cycle. Oligomerization and interaction with PCNA are necessary for optimal replication enhancement.

Its function is as follows. Increases viral DNA accumulation. Enhances infectivity and symptom expression. The chain is Replication enhancer protein from Mungbean yellow mosaic virus (strain Vigna) (MYMV).